The sequence spans 247 residues: Myeloid leukemia factor 2 (247 aa).

Positions 122–247 (ETSEMRSAPG…PSRQSRRYDW (126 aa)) are disordered. The span at 134–144 (RETRRTVRDSD) shows a compositional bias: basic and acidic residues. Positions 154 to 169 (HHIRDRAHILQRSRNH) are enriched in basic residues. A compositionally biased stretch (basic and acidic residues) spans 170 to 179 (RTGDQEERQD). The span at 182-192 (NLDESEAAAFD) shows a compositional bias: acidic residues. The segment covering 193 to 225 (DEWRRETSRYRQQRPLEFRRHEASVGGGRRAEG) has biased composition (basic and acidic residues). Phosphoserine is present on residues S216, S237, and S239.

This sequence belongs to the MLF family.

It localises to the cytoplasm. The protein resides in the nucleus. The polypeptide is Myeloid leukemia factor 2 (Mlf2) (Mus musculus (Mouse)).